Consider the following 198-residue polypeptide: Ribonuclease HII (198 aa).

In terms of domain architecture, RNase H type-2 spans Phe-3–Pro-198. A divalent metal cation-binding residues include Asp-9, Glu-10, and Asp-104.

The protein belongs to the RNase HII family. The cofactor is Mn(2+). It depends on Mg(2+) as a cofactor.

It localises to the cytoplasm. The catalysed reaction is Endonucleolytic cleavage to 5'-phosphomonoester.. In terms of biological role, endonuclease that specifically degrades the RNA of RNA-DNA hybrids. The sequence is that of Ribonuclease HII from Pyrobaculum neutrophilum (strain DSM 2338 / JCM 9278 / NBRC 100436 / V24Sta) (Thermoproteus neutrophilus).